Consider the following 607-residue polypeptide: Chaperone protein DnaK (607 aa).

Thr174 carries the post-translational modification Phosphothreonine; by autocatalysis. Over residues 579–592 the composition is skewed to low complexity; sequence AQAQAQQQAGANAG. The interval 579–607 is disordered; it reads AQAQAQQQAGANAGSDKKDEDVAEAEVVD.

This sequence belongs to the heat shock protein 70 family.

Functionally, acts as a chaperone. The sequence is that of Chaperone protein DnaK from Fusobacterium nucleatum subsp. nucleatum (strain ATCC 25586 / DSM 15643 / BCRC 10681 / CIP 101130 / JCM 8532 / KCTC 2640 / LMG 13131 / VPI 4355).